Here is a 240-residue protein sequence, read N- to C-terminus: Nicotinamide riboside kinase (240 aa).

13 to 21 (GCSSSGKTT) serves as a coordination point for ATP. Residues T20 and D39 each coordinate Mg(2+). D39 acts as the Proton acceptor in catalysis. Substrate contacts are provided by residues 39–42 (DDFY) and 59–60 (WD). R158 is an ATP binding site. Substrate is bound by residues R159 and 164–165 (GY). ATP contacts are provided by residues 162–164 (RKG) and 208–210 (KSK).

Belongs to the uridine kinase family. NRK subfamily.

It catalyses the reaction beta-nicotinamide D-riboside + ATP = beta-nicotinamide D-ribonucleotide + ADP + H(+). The catalysed reaction is beta-D-ribosylnicotinate + ATP = nicotinate beta-D-ribonucleotide + ADP + H(+). Its pathway is cofactor biosynthesis; NAD(+) biosynthesis. Its function is as follows. Catalyzes the phosphorylation of nicotinamide riboside (NR) and nicotinic acid riboside (NaR) to form nicotinamide mononucleotide (NMN) and nicotinic acid mononucleotide (NaMN). In Saccharomyces cerevisiae (strain ATCC 204508 / S288c) (Baker's yeast), this protein is Nicotinamide riboside kinase (NRK1).